We begin with the raw amino-acid sequence, 165 residues long: Crossover junction endodeoxyribonuclease RuvC (165 aa).

Active-site residues include aspartate 7, glutamate 67, and aspartate 140. Residues aspartate 7, glutamate 67, and aspartate 140 each contribute to the Mg(2+) site.

It belongs to the RuvC family. As to quaternary structure, homodimer which binds Holliday junction (HJ) DNA. The HJ becomes 2-fold symmetrical on binding to RuvC with unstacked arms; it has a different conformation from HJ DNA in complex with RuvA. In the full resolvosome a probable DNA-RuvA(4)-RuvB(12)-RuvC(2) complex forms which resolves the HJ. Requires Mg(2+) as cofactor.

It is found in the cytoplasm. The enzyme catalyses Endonucleolytic cleavage at a junction such as a reciprocal single-stranded crossover between two homologous DNA duplexes (Holliday junction).. The RuvA-RuvB-RuvC complex processes Holliday junction (HJ) DNA during genetic recombination and DNA repair. Endonuclease that resolves HJ intermediates. Cleaves cruciform DNA by making single-stranded nicks across the HJ at symmetrical positions within the homologous arms, yielding a 5'-phosphate and a 3'-hydroxyl group; requires a central core of homology in the junction. The consensus cleavage sequence is 5'-(A/T)TT(C/G)-3'. Cleavage occurs on the 3'-side of the TT dinucleotide at the point of strand exchange. HJ branch migration catalyzed by RuvA-RuvB allows RuvC to scan DNA until it finds its consensus sequence, where it cleaves and resolves the cruciform DNA. This Desulfitobacterium hafniense (strain DSM 10664 / DCB-2) protein is Crossover junction endodeoxyribonuclease RuvC.